The chain runs to 315 residues: Pantothenate kinase (315 aa).

94 to 101 (GSVAVGKS) serves as a coordination point for ATP.

It belongs to the prokaryotic pantothenate kinase family.

It localises to the cytoplasm. The enzyme catalyses (R)-pantothenate + ATP = (R)-4'-phosphopantothenate + ADP + H(+). It functions in the pathway cofactor biosynthesis; coenzyme A biosynthesis; CoA from (R)-pantothenate: step 1/5. This chain is Pantothenate kinase, found in Citrobacter koseri (strain ATCC BAA-895 / CDC 4225-83 / SGSC4696).